An 839-amino-acid polypeptide reads, in one-letter code: Taste receptor type 1 member 2 (839 aa).

The signal sequence occupies residues 1-19 (MGTRATTICSLFFLLWVLA). The Extracellular portion of the chain corresponds to 20–566 (EPAENSDFYL…VFLEWHEAPT (547 aa)). N-linked (GlcNAc...) asparagine glycosylation is found at asparagine 84, asparagine 248, asparagine 292, asparagine 312, asparagine 368, asparagine 407, asparagine 428, asparagine 487, and asparagine 527. Residues 567–587 (IAVALLAALGFLSTLAILVIF) form a helical membrane-spanning segment. At 588–602 (WRHFQTPIVRSAGGP) the chain is on the cytoplasmic side. A helical transmembrane segment spans residues 603–623 (MCFLMLTLLLVAYMVVPVYVG). Topologically, residues 624–635 (PPKVSTCLCRQA) are extracellular. Residues 636–656 (LFPLCFTICISCIAVRSFQIV) form a helical membrane-spanning segment. At 657-681 (CAFKMASRFPRAYSYWVRYQGPYVS) the chain is on the cytoplasmic side. Residues 682–702 (MAFITVLKMVIVVIGMLATGL) traverse the membrane as a helical segment. The Extracellular portion of the chain corresponds to 703-727 (SPTTRTDPDDPKITIVSCNPNYRNS). The chain crosses the membrane as a helical span at residues 728–748 (LLFNTSLDLLLSVVGFSFAYM). Residues 749–760 (GKELPTNYNEAK) lie on the Cytoplasmic side of the membrane. The helical transmembrane segment at 761 to 781 (FITLSMTFYFTSSVSLCTFMS) threads the bilayer. At 782 to 784 (AYS) the chain is on the extracellular side. Residues 785–805 (GVLVTIVDLLVTVLNLLAISL) traverse the membrane as a helical segment. Over 806 to 839 (GYFGPKCYMILFYPERNTPAYFNSMIQGYTMRRD) the chain is Cytoplasmic.

The protein belongs to the G-protein coupled receptor 3 family. TAS1R subfamily. Forms heterodimers with TAS1R3.

The protein localises to the cell membrane. In terms of biological role, putative taste receptor. TAS1R2/TAS1R3 recognizes diverse natural and synthetic sweeteners. The polypeptide is Taste receptor type 1 member 2 (TAS1R2) (Gorilla gorilla gorilla (Western lowland gorilla)).